Reading from the N-terminus, the 93-residue chain is Co-chaperonin GroES (93 aa).

It belongs to the GroES chaperonin family. Heptamer of 7 subunits arranged in a ring. Interacts with the chaperonin GroEL.

The protein resides in the cytoplasm. Together with the chaperonin GroEL, plays an essential role in assisting protein folding. The GroEL-GroES system forms a nano-cage that allows encapsulation of the non-native substrate proteins and provides a physical environment optimized to promote and accelerate protein folding. GroES binds to the apical surface of the GroEL ring, thereby capping the opening of the GroEL channel. The polypeptide is Co-chaperonin GroES (Geobacillus kaustophilus (strain HTA426)).